The primary structure comprises 354 residues: Type II restriction enzyme BanI (354 aa).

In terms of assembly, homodimer.

The catalysed reaction is Endonucleolytic cleavage of DNA to give specific double-stranded fragments with terminal 5'-phosphates.. Functionally, a P subtype restriction enzyme that recognizes the double-stranded sequence 5'-GGYRCC-3' and cleaves after G-1. The chain is Type II restriction enzyme BanI (banIR) from Aneurinibacillus aneurinilyticus (Bacillus aneurinolyticus).